A 1021-amino-acid chain; its full sequence is Probable calcium-transporting ATPase 6, plasma membrane-type (1021 aa).

Residues 1–155 (MEGGRSWSIE…RSFWMFVWDA (155 aa)) are Cytoplasmic-facing. A run of 2 helical transmembrane segments spans residues 156-176 (LHDLTLIILVVCALVSIVVGL) and 181-201 (WPMGIYDGFGIILSILLVVLV). At 202–241 (TATSDYQQARKFMELDREKQKIYIRVTRDKKTKEVLVHDL) the chain is on the cytoplasmic side. The next 2 helical transmembrane spans lie at 242–262 (VVGDILHLSIGDVVPADGLFI) and 338–358 (VATIIGQIGLVFAVLTFLVLL). At 359 to 384 (ARFLADKGMHVGLLNWSANDALTIVN) the chain is on the cytoplasmic side. A helical transmembrane segment spans residues 385–405 (YFAIAVTIIVVAVPEGLPLAV). Asp441 (4-aspartylphosphate intermediate) is an active-site residue. Mg(2+) contacts are provided by Asp740 and Asp744. A helical membrane pass occupies residues 807-827 (IVALIVNFVSACIIGSAPLTA). Residues 828-829 (VQ) lie on the Cytoplasmic side of the membrane. 2 helical membrane-spanning segments follow: residues 830 to 850 (LLWVNMIMDTLGALALATEPP) and 879 to 899 (GLYQLLVLATLMVIGKKLLSI). Over 900–942 (EGPQSDKTINTLIFNSFVFCQVFNEINCREMEKINVLQGIFRN) the chain is Cytoplasmic. The next 2 helical transmembrane spans lie at 943–963 (WIFVGILTATVIFQVIIVEFL) and 974–994 (GELWLLSVVIGSISMIISVIL). The Cytoplasmic portion of the chain corresponds to 995–1021 (KCIPVEFNKTNTKPHGYELIPEGPEIL).

This sequence belongs to the cation transport ATPase (P-type) (TC 3.A.3) family. Type IIB subfamily.

The protein resides in the membrane. The catalysed reaction is Ca(2+)(in) + ATP + H2O = Ca(2+)(out) + ADP + phosphate + H(+). Its activity is regulated as follows. Activated by calmodulin. Functionally, this magnesium-dependent enzyme catalyzes the hydrolysis of ATP coupled with the translocation of calcium from the cytosol out of the cell, into the endoplasmic reticulum, or into organelles. The sequence is that of Probable calcium-transporting ATPase 6, plasma membrane-type from Oryza sativa subsp. japonica (Rice).